A 379-amino-acid chain; its full sequence is Putative zinc metalloprotease sll0528 (379 aa).

The next 2 helical transmembrane spans lie at 20-40 (LFGI…LVTL) and 54-74 (GGTP…SVVA). Zn(2+) is bound at residue H75. E76 is a catalytic residue. H79 is a binding site for Zn(2+). 3 helical membrane passes run 115–135 (FAVA…LTIV), 148–168 (IIGL…IPGL), and 212–232 (GILN…WFLL). 2 CBS domains span residues 257–315 (VIPN…DWPQ) and 322–379 (MQYP…TSAA).

Belongs to the peptidase M50B family. The cofactor is Zn(2+).

It is found in the cell membrane. The protein is Putative zinc metalloprotease sll0528 of Synechocystis sp. (strain ATCC 27184 / PCC 6803 / Kazusa).